The sequence spans 766 residues: FYVE, RhoGEF and PH domain-containing protein 4 (766 aa).

The tract at residues methionine 1–asparagine 150 is actin filament-binding. Composition is skewed to polar residues over residues leucine 47–proline 62 and histidine 70–glutamine 85. Disordered stretches follow at residues leucine 47–histidine 86 and isoleucine 143–glycine 173. A DH domain is found at lysine 206 to alanine 393. In terms of domain architecture, PH 1 spans glutamate 422–aspartate 521. The FYVE-type zinc finger occupies aspartate 559–serine 619. Zn(2+) contacts are provided by cysteine 565, cysteine 568, cysteine 582, cysteine 585, cysteine 590, cysteine 593, cysteine 611, and cysteine 614. Residues asparagine 643 to threonine 740 enclose the PH 2 domain. 2 positions are modified to phosphoserine: serine 702 and serine 716. The interval glycine 746–cysteine 766 is disordered.

Homooligomer. In terms of tissue distribution, detected in thymus, lung, heart, skeletal muscle, small intestine, liver, kidney, spleen and testis. Expressed in all parts of the brain and in the spinal cord at embryonic, postnatal, and adult stages. Levels of expression are lower in postnatal and adult tissues than in embryonic tissues.

The protein resides in the cytoplasm. The protein localises to the cytoskeleton. It localises to the cell projection. It is found in the filopodium. Activates CDC42, a member of the Ras-like family of Rho- and Rac proteins, by exchanging bound GDP for free GTP. Activates MAPK8. Plays a role in regulating the actin cytoskeleton and cell shape. Promotes the formation of lamellipodia. This chain is FYVE, RhoGEF and PH domain-containing protein 4 (Fgd4), found in Mus musculus (Mouse).